The chain runs to 499 residues: Lysine--tRNA ligase (499 aa).

Mg(2+) contacts are provided by Glu408 and Glu415.

This sequence belongs to the class-II aminoacyl-tRNA synthetase family. Homodimer. Mg(2+) serves as cofactor.

Its subcellular location is the cytoplasm. It carries out the reaction tRNA(Lys) + L-lysine + ATP = L-lysyl-tRNA(Lys) + AMP + diphosphate. This chain is Lysine--tRNA ligase, found in Bacillus cereus (strain AH820).